The following is a 357-amino-acid chain: tRNA-specific 2-thiouridylase MnmA (357 aa).

ATP-binding positions include 11 to 18 and Leu-37; that span reads AMSGGVDS. The active-site Nucleophile is the Cys-102. A disulfide bridge connects residues Cys-102 and Cys-197. Gly-126 is a binding site for ATP. The interaction with tRNA stretch occupies residues 148–150; that stretch reads KDQ. The Cysteine persulfide intermediate role is filled by Cys-197. Residues 301 to 302 form an interaction with tRNA region; sequence RY.

This sequence belongs to the MnmA/TRMU family.

It localises to the cytoplasm. It catalyses the reaction S-sulfanyl-L-cysteinyl-[protein] + uridine(34) in tRNA + AH2 + ATP = 2-thiouridine(34) in tRNA + L-cysteinyl-[protein] + A + AMP + diphosphate + H(+). In terms of biological role, catalyzes the 2-thiolation of uridine at the wobble position (U34) of tRNA, leading to the formation of s(2)U34. The polypeptide is tRNA-specific 2-thiouridylase MnmA (Dehalococcoides mccartyi (strain ATCC BAA-2266 / KCTC 15142 / 195) (Dehalococcoides ethenogenes (strain 195))).